A 375-amino-acid chain; its full sequence is Dual-specificity RNA methyltransferase RlmN (375 aa).

The Proton acceptor role is filled by Glu-94. In terms of domain architecture, Radical SAM core spans 100-339 (EEDRATLCVS…VTVRKTRGDD (240 aa)). A disulfide bond links Cys-107 and Cys-344. [4Fe-4S] cluster-binding residues include Cys-114, Cys-118, and Cys-121. S-adenosyl-L-methionine-binding positions include 168–169 (GE), Ser-200, 222–224 (SLH), and Asn-301. Residue Cys-344 is the S-methylcysteine intermediate of the active site.

Belongs to the radical SAM superfamily. RlmN family. Requires [4Fe-4S] cluster as cofactor.

It is found in the cytoplasm. It catalyses the reaction adenosine(2503) in 23S rRNA + 2 reduced [2Fe-2S]-[ferredoxin] + 2 S-adenosyl-L-methionine = 2-methyladenosine(2503) in 23S rRNA + 5'-deoxyadenosine + L-methionine + 2 oxidized [2Fe-2S]-[ferredoxin] + S-adenosyl-L-homocysteine. The catalysed reaction is adenosine(37) in tRNA + 2 reduced [2Fe-2S]-[ferredoxin] + 2 S-adenosyl-L-methionine = 2-methyladenosine(37) in tRNA + 5'-deoxyadenosine + L-methionine + 2 oxidized [2Fe-2S]-[ferredoxin] + S-adenosyl-L-homocysteine. Its function is as follows. Specifically methylates position 2 of adenine 2503 in 23S rRNA and position 2 of adenine 37 in tRNAs. m2A2503 modification seems to play a crucial role in the proofreading step occurring at the peptidyl transferase center and thus would serve to optimize ribosomal fidelity. This Vibrio parahaemolyticus serotype O3:K6 (strain RIMD 2210633) protein is Dual-specificity RNA methyltransferase RlmN.